We begin with the raw amino-acid sequence, 414 residues long: Procollagen C-endopeptidase enhancer 2 (414 aa).

An N-terminal signal peptide occupies residues 1-22 (MGGASACIPLCLLLATARMARP). Intrachain disulfides connect Cys32–Cys58, Cys85–Cys106, Cys153–Cys180, Cys207–Cys230, Cys296–Cys363, Cys300–Cys366, and Cys311–Cys414. 2 consecutive CUB domains span residues 32–143 (CGGI…YSAA) and 153–267 (CGGR…YKFR). The NTR domain maps to 296–414 (CQQKCRRMGT…PMNALKNKQC (119 aa)). Asn354 carries an N-linked (GlcNAc...) asparagine glycan.

As to quaternary structure, interacts with heparin with high affinity, and type I or II collagen. O-glycosylated; contains sialic acid.

Its subcellular location is the secreted. Functionally, binds to the C-terminal propeptide of types I and II procollagens and may enhance the cleavage of that propeptide by BMP1. The sequence is that of Procollagen C-endopeptidase enhancer 2 (Pcolce2) from Mus musculus (Mouse).